Reading from the N-terminus, the 278-residue chain is Gamma carbonic anhydrase 2, mitochondrial (278 aa).

Residues 1–43 constitute a mitochondrion transit peptide; it reads MGTLGRAIYTVGNWIRGTGQALDRVGSLLQGSHRIEEHLSRHR. Substrate is bound by residues 86 to 88 and 101 to 102; these read RGD and QD. Positions 107, 130, and 135 each coordinate Zn(2+). Position 209 (Asn-209) interacts with substrate.

Belongs to the gamma-class carbonic anhydrase family. Homotrimer. Component of the mitochondrial oxidoreductase respiratory chain complex I; element of the extra matrix-exposed domain, which is attached to the membrane arm of this complex. Interacts with GAMMACAL1 and GAMMACAL2. Zn(2+) serves as cofactor. As to expression, constitutively expressed in roots and leaves, with higher levels in flowers, particularly in tapetal tissue of anthers, inflorescence (IM) and floral meristems (FM).

It is found in the mitochondrion membrane. Its function is as follows. Enzyme involved in the catabolism of H(2)CO(3) but that does not mediates the reversible hydration of carbon dioxide. Mediates complex I assembly in mitochondria and respiration. Binds HCO(3)-. Required for male fertility during anther development and dehiscence to regulate the secondary thickenings of the endothecial cell wall, probably by modulating H(2)O(2)-dependent lignin polymerization. The polypeptide is Gamma carbonic anhydrase 2, mitochondrial (GAMMACA2) (Arabidopsis thaliana (Mouse-ear cress)).